The chain runs to 305 residues: METERRIITSCSAMTALFLFMTALMASSSIAATPTQSFEDNFNIMWSENHFTTSDDGEIWNLSLDNDTGCGFQTKHMYRFGWFSMKLKLVGGDSAGVVTAYYMCSENGAGPERDEIDFEFLGNRTGQPYIIQTNVYKNGTGNREMRHSLWFDPTKDYHTYSILWNNHQLVFFVDRVPIRVYKNSDKVPNNDFFPNQKPMYLFSSIWNADDWATRGGLEKTDWKKAPFVSSYKDFAVEGCRWKDPFPACVSTTTENWWDQYDAWHLSKTQKMDYAWVQRNLVVYDYCKDSERFPTLPWECSISPWA.

Residues 1–31 (METERRIITSCSAMTALFLFMTALMASSSIA) form the signal peptide. The GH16 domain occupies 32–231 (ATPTQSFEDN…WKKAPFVSSY (200 aa)). Asn61 and Asn66 each carry an N-linked (GlcNAc...) asparagine glycan. The active-site Nucleophile is the Glu115. Glu119 functions as the Proton donor in the catalytic mechanism. Glu119 is a xyloglucan binding site. N-linked (GlcNAc...) asparagine glycosylation is present at Asn123. 132–134 (QTN) contributes to the xyloglucan binding site. An N-linked (GlcNAc...) asparagine glycan is attached at Asn138. Xyloglucan contacts are provided by residues 142 to 144 (NRE), 210 to 211 (DW), and Gly215. 2 disulfides stabilise this stretch: Cys239–Cys248 and Cys286–Cys299. Arg291 serves as a coordination point for xyloglucan.

The protein belongs to the glycosyl hydrolase 16 family. XTH group 1 subfamily. Contains at least one intrachain disulfide bond essential for its enzymatic activity.

Its subcellular location is the secreted. The protein resides in the cell wall. It localises to the extracellular space. The protein localises to the apoplast. It catalyses the reaction breaks a beta-(1-&gt;4) bond in the backbone of a xyloglucan and transfers the xyloglucanyl segment on to O-4 of the non-reducing terminal glucose residue of an acceptor, which can be a xyloglucan or an oligosaccharide of xyloglucan.. In terms of biological role, catalyzes xyloglucan endohydrolysis (XEH) and/or endotransglycosylation (XET). Cleaves and religates xyloglucan polymers, an essential constituent of the primary cell wall, and thereby participates in cell wall construction of growing tissues. In Arabidopsis thaliana (Mouse-ear cress), this protein is Probable xyloglucan endotransglucosylase/hydrolase protein 8 (XTH8).